The primary structure comprises 61 residues: Large ribosomal subunit protein uL30 (61 aa).

The protein belongs to the universal ribosomal protein uL30 family. As to quaternary structure, part of the 50S ribosomal subunit.

The sequence is that of Large ribosomal subunit protein uL30 from Laribacter hongkongensis (strain HLHK9).